The primary structure comprises 308 residues: Atrochrysone carboxyl ACP thioesterase (308 aa).

The Zn(2+) site is built by His-99, His-101, Asp-103, and His-104. Asp-103 acts as the Proton donor/acceptor in catalysis.

The protein belongs to the metallo-beta-lactamase superfamily. Requires Zn(2+) as cofactor.

It catalyses the reaction atrochrysone carboxyl-[ACP] + H2O = atrochrysone carboxylate + holo-[ACP] + H(+). It participates in secondary metabolite biosynthesis. Atrochrysone carboxyl ACP thioesterase; part of the gene cluster that mediates the biosynthesis of physcion, a natural anthraquinone fungicide that can prevent plant fungal infections. The pathway begins with the polyketide synthase AcPKS that condenses 8 malonyl-CoA units to synthesize atrochrysone thioester which is released from the synthase by the atrochrysone carboxyl ACP thioesterase AcTE that breaks the thioester bond and leads to free atrochrysone carboxylic acid. Spontaneous decarboxylation of atrochrysone carboxylic acid leads to the formation of atrochrysone. Then, atrochrysone undergoes spontaneous dehydration and oxidation, giving the products emodin anthrone and emodin. The O-methyltransferase AcOMT then methylates the C-6 hydroxyl of emodin to form physcion. The protein is Atrochrysone carboxyl ACP thioesterase of Aspergillus chevalieri (Eurotium chevalieri).